The primary structure comprises 149 residues: Transcriptional regulator MraZ (149 aa).

2 consecutive SpoVT-AbrB domains span residues Ala-9–Gln-52 and Ala-82–Arg-125.

It belongs to the MraZ family. Forms oligomers.

It is found in the cytoplasm. It localises to the nucleoid. This is Transcriptional regulator MraZ from Treponema pallidum subsp. pallidum (strain SS14).